We begin with the raw amino-acid sequence, 126 residues long: Aspartate 1-decarboxylase (126 aa).

Ser-25 (schiff-base intermediate with substrate; via pyruvic acid) is an active-site residue. Ser-25 carries the post-translational modification Pyruvic acid (Ser). Residue Thr-57 participates in substrate binding. Tyr-58 acts as the Proton donor in catalysis. 73 to 75 (GGA) contributes to the substrate binding site.

Belongs to the PanD family. In terms of assembly, heterooctamer of four alpha and four beta subunits. Pyruvate is required as a cofactor. Is synthesized initially as an inactive proenzyme, which is activated by self-cleavage at a specific serine bond to produce a beta-subunit with a hydroxyl group at its C-terminus and an alpha-subunit with a pyruvoyl group at its N-terminus.

The protein localises to the cytoplasm. The catalysed reaction is L-aspartate + H(+) = beta-alanine + CO2. Its pathway is cofactor biosynthesis; (R)-pantothenate biosynthesis; beta-alanine from L-aspartate: step 1/1. Functionally, catalyzes the pyruvoyl-dependent decarboxylation of aspartate to produce beta-alanine. This Stenotrophomonas maltophilia (strain K279a) protein is Aspartate 1-decarboxylase.